A 329-amino-acid chain; its full sequence is Ferredoxin--NAD(P)(+) reductase CarAd (329 aa).

Residues 2-92 form the 2Fe-2S ferredoxin-type domain; that stretch reads YQLKIEGQAP…DLRIKVAVQD (91 aa). [2Fe-2S] cluster-binding residues include C35, C40, C43, and C76. An FAD-binding FR-type domain is found at 100 to 200; sequence ISRMEAEVVE…TGPMGTSFFR (101 aa).

Monomer. Carbazole 1,9a-dioxygenase complex consists of a terminal oxygenase component CarAa, a ferredoxin reductase component CarAd and a ferredoxin component CarAc. The cofactor is [2Fe-2S] cluster. FAD serves as cofactor.

It catalyses the reaction 2 reduced [2Fe-2S]-[ferredoxin] + NAD(+) + H(+) = 2 oxidized [2Fe-2S]-[ferredoxin] + NADH. The catalysed reaction is 2 reduced [2Fe-2S]-[ferredoxin] + NADP(+) + H(+) = 2 oxidized [2Fe-2S]-[ferredoxin] + NADPH. Functionally, part of the multicomponent carbazole 1,9a-dioxygenase (CARDO), that converts carbazole (CAR) into 2-aminobiphenyl-2,3-diol. It can use both NAD and NADP as electron donors, but NAD is supposed to be the physiological electron donor. The protein is Ferredoxin--NAD(P)(+) reductase CarAd (carAd) of Metapseudomonas resinovorans (Pseudomonas resinovorans).